The following is a 639-amino-acid chain: UvrABC system protein C (639 aa).

In terms of domain architecture, GIY-YIG spans 20 to 97; sequence ERSGVYRMFD…IKKFQPKFNI (78 aa). The 36-residue stretch at 207–242 folds into the UVR domain; sequence KELQENLSRKMEELSSQMRFEEAAEIRDRIKALSYV.

The protein belongs to the UvrC family. As to quaternary structure, interacts with UvrB in an incision complex.

The protein resides in the cytoplasm. Its function is as follows. The UvrABC repair system catalyzes the recognition and processing of DNA lesions. UvrC both incises the 5' and 3' sides of the lesion. The N-terminal half is responsible for the 3' incision and the C-terminal half is responsible for the 5' incision. This Rickettsia conorii (strain ATCC VR-613 / Malish 7) protein is UvrABC system protein C.